Consider the following 281-residue polypeptide: Nucleoid occlusion protein (281 aa).

A disordered region spans residues 1–26; that stretch reads MKHPFSRLFSFGEKEQEEAGGKQERE. The segment covering 12–26 has biased composition (basic and acidic residues); the sequence is GEKEQEEAGGKQERE. Positions 145-164 form a DNA-binding region, H-T-H motif; it reads EALAQRLGKGQSTIANKLRL.

Belongs to the ParB family.

It is found in the cytoplasm. Its subcellular location is the nucleoid. Functionally, effects nucleoid occlusion by binding relatively nonspecifically to DNA and preventing the assembly of the division machinery in the vicinity of the nucleoid, especially under conditions that disturb the cell cycle. It helps to coordinate cell division and chromosome segregation by preventing the formation of the Z ring through the nucleoid, which would cause chromosome breakage. In Geobacillus thermodenitrificans (strain NG80-2), this protein is Nucleoid occlusion protein.